The following is a 369-amino-acid chain: Terpene cyclase DEP1 (369 aa).

8 helical membrane passes run 9–29 (FFYL…FNGM), 82–102 (LLFF…LIES), 118–138 (AMVL…LYLV), 157–177 (ALLV…VPAW), 190–210 (IALF…LASI), 234–254 (LVLA…GALI), 298–318 (LFSQ…SHLL), and 342–362 (LVYL…SFAL).

This sequence belongs to the membrane-bound ascI terpene cyclase family.

It localises to the membrane. It functions in the pathway polyketide biosynthesis. Part of the gene cluster that mediates the biosynthesis of depudecin, a highly oxidized eleven-carbon linear polyketide that acts as a histone deacetylase (HDAC) inhibitor and makes a small contribution to pathogenesis. The reducing polyketide synthase DEP5 is the central enzyme in depudecin biosynthesis by yielding the backbone polyketide chain. The monooxygenases DEP2 and DEP4, as well as the uncharacterized protein DEP1, then act as tailoring enzymes to modify the intermediate polyketide chain into depudecin. This chain is Terpene cyclase DEP1, found in Alternaria brassicicola (Dark leaf spot agent).